The following is a 191-amino-acid chain: Peptidyl-tRNA hydrolase (191 aa).

Tyrosine 17 is a tRNA binding site. Histidine 22 functions as the Proton acceptor in the catalytic mechanism. Tyrosine 68, asparagine 70, and asparagine 116 together coordinate tRNA.

Belongs to the PTH family. As to quaternary structure, monomer.

The protein localises to the cytoplasm. The catalysed reaction is an N-acyl-L-alpha-aminoacyl-tRNA + H2O = an N-acyl-L-amino acid + a tRNA + H(+). Its function is as follows. Hydrolyzes ribosome-free peptidyl-tRNAs (with 1 or more amino acids incorporated), which drop off the ribosome during protein synthesis, or as a result of ribosome stalling. Functionally, catalyzes the release of premature peptidyl moieties from peptidyl-tRNA molecules trapped in stalled 50S ribosomal subunits, and thus maintains levels of free tRNAs and 50S ribosomes. This Francisella tularensis subsp. holarctica (strain FTNF002-00 / FTA) protein is Peptidyl-tRNA hydrolase.